Reading from the N-terminus, the 74-residue chain is M-myrmeciitoxin-Mb1a (74 aa).

The first 26 residues, 1–26 (MKLSCLLLTLAIIVVLTIVHAPNVEA), serve as a signal peptide directing secretion. The propeptide occupies 27–50 (KALADPESDAVGFADAVGEADPNA). Residue Gln-73 is modified to Glutamine amide.

This sequence belongs to the formicidae venom precursor-01 superfamily. Ant pilosulin family. Expressed by the venom gland.

Its subcellular location is the secreted. Its function is as follows. Shows moderate activity against E.coli and S.aureus (MIC&lt;25 uM), slight activity against B.subtilis (MIC&lt;50 uM), and no activity against L.garvieae, P.aeruginosa, C.albicans, and S.cerevisiae. Has no hemolytic nor cytolytic activity. Causes an IgE-independent histamine release. The sequence is that of M-myrmeciitoxin-Mb1a from Myrmecia banksi (Jack jumper ant).